The chain runs to 864 residues: Dynamin-1 (864 aa).

The 267-residue stretch at 28–294 folds into the Dynamin-type G domain; it reads DLDLPQIAVV…LTNHIRDTLP (267 aa). The segment at 38 to 45 is G1 motif; the sequence is GGQSAGKS. Ser-41, Gly-43, Lys-44, Ser-45, Ser-46, Arg-59, and Gly-60 together coordinate GDP. The tract at residues 64-66 is G2 motif; it reads VTR. Tyr-80 bears the Phosphotyrosine mark. Tyr-125 bears the 3'-nitrotyrosine; alternate mark. Tyr-125 is subject to Phosphotyrosine; alternate. The segment at 136–139 is G3 motif; that stretch reads DLPG. Residues 205 to 208 form a G4 motif region; that stretch reads TKLD. GDP contacts are provided by Lys-206, Asp-208, Asp-211, Asn-236, Arg-237, and Gln-239. Residues 235–238 are G5 motif; it reads VNRS. Phosphoserine occurs at positions 306 and 347. Tyr-354 is subject to Phosphotyrosine. Ser-512 is subject to Phosphoserine. In terms of domain architecture, PH spans 519–625; it reads LVIRKGWLTI…WKASFLRAGV (107 aa). In terms of domain architecture, GED spans 659–750; sequence VETIRNLVDS…IIGDINTTTV (92 aa). The disordered stretch occupies residues 767 to 864; it reads SVPAGRRSPT…PESPRPPFDL (98 aa). At Ser-774 the chain carries Phosphoserine; by GSK3-beta. Ser-778 is modified (phosphoserine). An Omega-N-methylarginine modification is found at Arg-796. Ser-822 bears the Phosphoserine mark. The span at 825 to 843 shows a compositional bias: pro residues; sequence PFGPPPQVPSRPNRAPPGV. Ser-851 and Ser-857 each carry phosphoserine.

It belongs to the TRAFAC class dynamin-like GTPase superfamily. Dynamin/Fzo/YdjA family. As to quaternary structure, homodimer; homodimerization is mediated by the dynamin-type G domain which promotes assembly-stimulated GTPase activity. Homo-tetramer formed from two dimers in the absence of lipid. Oligomerizes into a helical polymer that self-assembles around the vesicle membrane, when associated to the menbrane through lipid binding. Interacts (via C-terminal proline-rich domain (PRD)) with SNX9 (via SH3 domain); this interaction allows regulation of DNM1 self-assembly during late stages of endocytic vesicle formation and supports DNM1's early functions in accelerating clathrin-coated pits (CCPs) maturation in non neuronals cell. Interacts (via C-terminal proline-rich domain (PRD)) with MYO1E (via SH3 domain); this interaction regulates receptor-mediated endocytosis. Interacts with SNX33 (via SH3 domain); this interaction decreases DNM1-dependent endocytosis. Interacts with DIAPH1. Interacts with GRB2 (via SH3 domain); this interaction mediates disassembly of DNM1 polymers, therefore modulates self-assembly. Forms a complex with BIN1 (via SH3 domain) and SH3GL2 (via SH3 domain). Forms a complex with SH3GL2 (via SH3 domain) and AMPH (via SH3 domain). Forms a complex with SH3GL2 (via SH3 domain) and SYNJ1. Interacts with AMPH. Interacts (via C-terminal proline-rich domain (PRD)) with SYT1; this interaction facilitates vesicle fission during clathrin-mediated endocytosis (CME). Interacts (via C-terminal proline-rich domain (PRD)) with PLCG1 (via SH3 domain); this interaction stimulates the release of GDP from DNM1 and enhances DNM1-dependent endocytosis. Interacts with SNPH; this interaction inhibits the binding of DNM1 to AMPH and DNM1-receptor-mediated endocytosis. Interacts with CAV1. Interacts with SH3GLB1 (via SH3 domain). Interacts with PACSIN1 (via SH3 domain), PACSIN2 (via SH3 domain) and PACSIN3 (via SH3 domain). Interacts with UNC119; this interaction decreases DNM1's GTPase activity and affects DNM1's interaction with AMPH. Interacts (GTP-bound form) with DNAJC6; this interaction allows clathrin-coated vesicle (CCV) formation at the plasma membrane. Phosphorylation at Ser-774 by GSK3B/GSK3-beta leads to inactivation of receptor-mediated endocytosis in non-neuronal cells. Dephosphorylation at Ser-774, through the EGFR downstream signaling, leads to activation and regulates early stages of clathrin-mediated endocytosis (CME). Phosphorylated by CDK5 leading to synaptic vesicle endocytosis (SVE) activation.

The protein resides in the cell membrane. It is found in the membrane. The protein localises to the clathrin-coated pit. Its subcellular location is the cytoplasmic vesicle. It localises to the presynapse. The protein resides in the secretory vesicle. It is found in the chromaffin granule. It catalyses the reaction GTP + H2O = GDP + phosphate + H(+). With respect to regulation, GTPase activity is activated by 1-phosphatidyl-1D-myo-inositol 4,5-bisphosphate. GTPase activity is inhibited by the heterodimer G protein formed by GNB1 and GNG2 with an IC(50)=400 nM when DNM1 concentration is 5 nM. Catalyzes the hydrolysis of GTP and utilizes this energy to mediate vesicle scission and participates in many forms of endocytosis, such as clathrin-mediated endocytosis or synaptic vesicle endocytosis as well as rapid endocytosis (RE). Associates to the membrane, through lipid binding, and self-assembles into rings and stacks of interconnected rings through oligomerization to form a helical polymer around the vesicle membrane leading to constriction of invaginated coated pits around their necks. Self-assembly of the helical polymer induces membrane tubules narrowing until the polymer reaches a length sufficient to trigger GTP hydrolysis. Depending on the curvature imposed on the tubules, membrane detachment from the helical polymer upon GTP hydrolysis can cause spontaneous hemifission followed by complete fission. May play a role in regulating early stages of clathrin-mediated endocytosis in non-neuronal cells through its activation by dephosphorylation via the signaling downstream of EGFR. Controls vesicle size at a step before fission, during formation of membrane pits, at hippocampal synapses. Controls plastic adaptation of the synaptic vesicle recycling machinery to high levels of activity. Mediates rapid endocytosis (RE), a Ca(2+)-dependent and clathrin- and K(+)-independent process in chromaffin cells. Microtubule-associated force-producing protein involved in producing microtubule bundles and able to bind and hydrolyze GTP. Through its interaction with DNAJC6, acts during the early steps of clathrin-coated vesicle (CCV) formation. This Homo sapiens (Human) protein is Dynamin-1.